Consider the following 300-residue polypeptide: 4-hydroxy-tetrahydrodipicolinate synthase (300 aa).

Thr46 contacts pyruvate. Tyr134 (proton donor/acceptor) is an active-site residue. Lys162 serves as the catalytic Schiff-base intermediate with substrate. Val204 serves as a coordination point for pyruvate.

It belongs to the DapA family. Homotetramer; dimer of dimers.

The protein resides in the cytoplasm. It catalyses the reaction L-aspartate 4-semialdehyde + pyruvate = (2S,4S)-4-hydroxy-2,3,4,5-tetrahydrodipicolinate + H2O + H(+). The protein operates within amino-acid biosynthesis; L-lysine biosynthesis via DAP pathway; (S)-tetrahydrodipicolinate from L-aspartate: step 3/4. Catalyzes the condensation of (S)-aspartate-beta-semialdehyde [(S)-ASA] and pyruvate to 4-hydroxy-tetrahydrodipicolinate (HTPA). This is 4-hydroxy-tetrahydrodipicolinate synthase from Heliobacterium modesticaldum (strain ATCC 51547 / Ice1).